The chain runs to 1091 residues: Leucine--tRNA ligase, cytoplasmic (1091 aa).

Residues 53–63 (PYMNGYLHIGH) carry the 'HIGH' region motif. Positions 715–719 (KMSKS) match the 'KMSKS' region motif. Lys718 provides a ligand contact to ATP.

Belongs to the class-I aminoacyl-tRNA synthetase family.

The protein resides in the cytoplasm. The protein localises to the cytosol. The enzyme catalyses tRNA(Leu) + L-leucine + ATP = L-leucyl-tRNA(Leu) + AMP + diphosphate. In terms of biological role, catalyzes the specific attachment of an amino acid to its cognate tRNA in a two step reaction: the amino acid (AA) is first activated by ATP to form AA-AMP and then transferred to the acceptor end of the tRNA. This Arabidopsis thaliana (Mouse-ear cress) protein is Leucine--tRNA ligase, cytoplasmic.